Here is a 276-residue protein sequence, read N- to C-terminus: Undecaprenyl-diphosphatase 2 (276 aa).

8 helical membrane-spanning segments follow: residues 4–24 (IEAL…VSSL), 44–64 (DFLP…LIYF), 87–107 (ARLM…GLLL), 114–134 (LFAS…LLLW), 150–170 (LSFA…LPGF), 193–213 (FSFL…IPKL), 225–245 (LLLA…WFLM), and 256–276 (LRPF…FKLV).

It belongs to the UppP family.

The protein resides in the cell inner membrane. The catalysed reaction is di-trans,octa-cis-undecaprenyl diphosphate + H2O = di-trans,octa-cis-undecaprenyl phosphate + phosphate + H(+). Its function is as follows. Catalyzes the dephosphorylation of undecaprenyl diphosphate (UPP). Confers resistance to bacitracin. This Chromobacterium violaceum (strain ATCC 12472 / DSM 30191 / JCM 1249 / CCUG 213 / NBRC 12614 / NCIMB 9131 / NCTC 9757 / MK) protein is Undecaprenyl-diphosphatase 2.